Consider the following 523-residue polypeptide: Arylsulfatase K (523 aa).

A signal peptide spans 1–16 (MLRVFVLLIFNVNAYC). D35 and C75 together coordinate Ca(2+). The Nucleophile role is filled by C75. At C75 the chain carries 3-oxoalanine (Cys). An N-linked (GlcNAc...) asparagine glycan is attached at N103. Substrate is bound by residues K123 and H246. N-linked (GlcNAc...) asparagine glycosylation occurs at N257. 2 residues coordinate Ca(2+): D308 and H309. N-linked (GlcNAc...) asparagine glycosylation is present at N405.

It belongs to the sulfatase family. Ca(2+) is required as a cofactor. Post-translationally, the conversion to 3-oxoalanine (also known as C-formylglycine, FGly), of a serine or cysteine residue in prokaryotes and of a cysteine residue in eukaryotes, is critical for catalytic activity.

Its subcellular location is the secreted. It localises to the lysosome. The catalysed reaction is an aryl sulfate + H2O = a phenol + sulfate + H(+). It carries out the reaction Hydrolysis of the 2-sulfate groups of the 2-O-sulfo-D-glucuronate residues of chondroitin sulfate, heparin and heparitin sulfate.. Catalyzes the hydrolysis of pseudosubstrates such as p-nitrocatechol sulfate and p-nitrophenyl sulfate. Catalyzes the hydrolysis of the 2-sulfate groups of the 2-O-sulfo-D-glucuronate residues of chondroitin sulfate, heparin and heparitin sulfate. Acts selectively on 2-sulfoglucuronate and lacks activity against 2-sulfoiduronate. This Danio rerio (Zebrafish) protein is Arylsulfatase K (arsk).